The sequence spans 334 residues: Beta-hexosaminidase (334 aa).

Residues aspartate 62, arginine 70, arginine 130, and lysine 160–histidine 161 contribute to the substrate site. Catalysis depends on histidine 173, which acts as the Proton donor/acceptor. The Nucleophile role is filled by aspartate 243.

It belongs to the glycosyl hydrolase 3 family. NagZ subfamily.

It is found in the cytoplasm. The enzyme catalyses Hydrolysis of terminal non-reducing N-acetyl-D-hexosamine residues in N-acetyl-beta-D-hexosaminides.. The protein operates within cell wall biogenesis; peptidoglycan recycling. Plays a role in peptidoglycan recycling by cleaving the terminal beta-1,4-linked N-acetylglucosamine (GlcNAc) from peptide-linked peptidoglycan fragments, giving rise to free GlcNAc, anhydro-N-acetylmuramic acid and anhydro-N-acetylmuramic acid-linked peptides. The sequence is that of Beta-hexosaminidase from Photobacterium profundum (strain SS9).